We begin with the raw amino-acid sequence, 263 residues long: Protein YpjB (263 aa).

Residues 233–244 (DFDDSSSEDDPV) show a composition bias toward acidic residues. The disordered stretch occupies residues 233–263 (DFDDSSSEDDPVENSPVVTSPVVSSSKSSFQ). Residues 245–263 (ENSPVVTSPVVSSSKSSFQ) show a composition bias toward low complexity.

The chain is Protein YpjB (ypjB) from Escherichia coli (strain K12).